A 553-amino-acid chain; its full sequence is Glutamate--tRNA ligase (553 aa).

The 'HIGH' region signature appears at proline 103–histidine 113.

The protein belongs to the class-I aminoacyl-tRNA synthetase family. Glutamate--tRNA ligase type 2 subfamily.

The protein localises to the cytoplasm. The catalysed reaction is tRNA(Glu) + L-glutamate + ATP = L-glutamyl-tRNA(Glu) + AMP + diphosphate. Its function is as follows. Catalyzes the attachment of glutamate to tRNA(Glu) in a two-step reaction: glutamate is first activated by ATP to form Glu-AMP and then transferred to the acceptor end of tRNA(Glu). This chain is Glutamate--tRNA ligase, found in Methanothermobacter thermautotrophicus (strain ATCC 29096 / DSM 1053 / JCM 10044 / NBRC 100330 / Delta H) (Methanobacterium thermoautotrophicum).